The primary structure comprises 747 residues: Pentatricopeptide repeat-containing protein At5g39710 (747 aa).

15 PPR repeats span residues 133–167 (TSSV…GFMP), 168–203 (GVLS…QVSP), 204–238 (NVFT…GCLP), 239–273 (NVVT…GLEP), 274–308 (NLIS…GYSL), 309–343 (DEVT…GLTP), 344–378 (SVIT…GLCP), 379–413 (NERT…GFSP), 414–448 (SVVT…GLSP), 449–483 (DVVS…GIKP), 484–518 (DTIT…GLPP), 519–553 (DEFT…GVLP), 554–588 (DVVT…ESVP), 604–638 (EFKS…NHKP), and 639–673 (DGTA…GFLL).

Belongs to the PPR family. P subfamily.

In Arabidopsis thaliana (Mouse-ear cress), this protein is Pentatricopeptide repeat-containing protein At5g39710 (EMB2745).